The chain runs to 1194 residues: MFSLDSFRKDRAQHRQRQCKLPPPRLPPMCVNPTPGGTISRASRDLLKEFPQPKNLLNSVIGRALGISHAKDKLVYVHTNGPKKKKVTLHIKWPKSVEVEGYGSKKIDAERQAAAAACQLFKGWGLLGPRNELFDAAKYRVLADRFGSPADSWWRPEPTMPPTSWRQLNPESIRPGGPGGLSRSLGREEEEDEEEELEEGTIDVTDFLSMTQQDSHAPLRDSRGSSFEMTDDDSAIRALTQFPLPKNLLAKVIQIATSSSTAKNLMQFHTVGTKTKLSTLTLLWPCPMTFVAKGRRKAEAENKAAALACKKLKSLGLVDRNNEPLTHAMYNLASLRELGETQRRPCTIQVPEPILRKIETFLNHYPVESSWIAPELRLQSDDILPLGKDSGPLSDPITGKPYVPLLEAEEVRLSQSLLELWRRRGPVWQEAPQLPVDPHRDTILNAIEQHPVVVISGDTGCGKTTRIPQLLLERYVTEGRGARCNVIITQPRRISAVSVAQRVSHELGPSLRRNVGFQVRLESKPPSRGGALLFCTVGILLRKLQSNPSLEGVSHVIVDEVHERDVNTDFLLILLKGLQRLNPALRLVLMSATGDNERFSRYFGGCPVIKVPGFMYPVKEHYLEDILAKLGKHQYLHRHRHHESEDECALDLDLVTDLVLHIDARGEPGGILCFLPGWQEIKGVQQRLQEALGMHESKYLILPVHSNIPMMDQKAIFQQPPVGVRKIVLATNIAETSITINDIVHVVDSGLHKEERYDLKTKVSCLETVWVSRANVIQRRGRAGRCQSGFAYHLFPRSRLEKMVPFQVPEILRTPLENLVLQAKIHMPEKTAVEFLSKAVDSPNIKAVDEAVILLQEIGVLDQREYLTTLGQRLAHISTDPRLAKAIVLAAIFRCLHPLLVVVSCLTRDPFSSSLQNRAEVDKVKALLSHDSGSDHLAFVRAVAGWEEVLRWQDRSSRENYLEENLLYAPSLRFIHGLIKQFSENIYEAFLVGKPSDCTLASAQCNEYSEEEELVKGVLMAGLYPNLIQVRQGKVTRQGKFKPNSVTYRTKSGNILLHKSTINREATRLRSRWLTYFMAVKSNGSVFVRDSSQVHPLAVLLLTDGDVHIRDDGRRATISLSDSDLLRLEGDSRTVRLLKELRRALGRMVERSLRSELAALPPSVQEEHGQLLALLAELLRGPCGSFDVRKTADD.

Positions methionine 1–aspartate 10 are enriched in basic and acidic residues. Residues methionine 1 to proline 27 are disordered. A phosphoserine mark is found at serine 6 and arginine 15. A DRBM domain is found at proline 53–phenylalanine 121. The disordered stretch occupies residues alanine 150–glutamate 199. Residues glutamate 188 to glutamate 199 are compositionally biased toward acidic residues. A phosphoserine mark is found at serine 226 and serine 380. Positions leucine 444–proline 612 constitute a Helicase ATP-binding domain. ATP is bound at residue glycine 457–threonine 464. Positions aspartate 559–histidine 562 match the DEAH box motif. One can recognise a Helicase C-terminal domain in the interval leucine 654–methionine 827.

It belongs to the DEAD box helicase family. DEAH subfamily. In terms of assembly, identified in a complex with TFAM and SSBP1. Interacts with AGO1 and AGO2. Interacts (via N-terminus) with ZC3HAV1 (via N-terminal domain) in an RNA-independent manner. Found in a complex with GRSF1, DDX28, FASTKD2 and FASTKD5. In terms of processing, phosphorylated on Ser-15.

The protein resides in the cytoplasm. Its subcellular location is the mitochondrion. The protein localises to the mitochondrion matrix. It is found in the mitochondrion nucleoid. The enzyme catalyses ATP + H2O = ADP + phosphate + H(+). Its function is as follows. RNA-dependent helicase. Plays an important role in the assembly of the mitochondrial large ribosomal subunit. Required for optimal function of the zinc-finger antiviral protein ZC3HAV1. Associates with mitochondrial DNA. Involved in nervous system development and differentiation through its involvement in the up-regulation of a number of genes which are required for neurogenesis, including GSC, NCAM1, neurogenin, and NEUROD. This is ATP-dependent RNA helicase DHX30 (DHX30) from Homo sapiens (Human).